The chain runs to 264 residues: Hemin import ATP-binding protein HmuV (264 aa).

Positions 2–241 constitute an ABC transporter domain; the sequence is IEVSGVSVRL…ETMLAVFGCA (240 aa). 34-41 contacts ATP; sequence GPNGSGKT.

It belongs to the ABC transporter superfamily. Heme (hemin) importer (TC 3.A.1.14.5) family. As to quaternary structure, the complex is composed of two ATP-binding proteins (HmuV), two transmembrane proteins (HmuU) and a solute-binding protein (HmuT).

The protein localises to the cell inner membrane. Functionally, part of the ABC transporter complex HmuTUV involved in hemin import. Responsible for energy coupling to the transport system. The protein is Hemin import ATP-binding protein HmuV of Rhizobium johnstonii (strain DSM 114642 / LMG 32736 / 3841) (Rhizobium leguminosarum bv. viciae).